A 7785-amino-acid polypeptide reads, in one-letter code: Probable non-canonical nonribosomal peptide synthetase (NRPS) CymA (7785 aa).

3 Carrier domains span residues 487 to 562, 1908 to 1983, and 2958 to 3033; these read TARS…QRQE, HART…SEQQ, and SPGM…LEGG. O-(pantetheine 4'-phosphoryl)serine occurs at positions 522, 1943, and 2993. Residues 3088–3111 form an LRR 1 repeat; that stretch reads RLALADVVVRHEALRTVFAERAGN. Carrier domains lie at 3978–4053, 5002–5077, and 6389–6464; these read APRT…SEQQ, EPRT…LEAN, and GPRD…AQGS. Residues S4013, S5037, and S6424 each carry the O-(pantetheine 4'-phosphoryl)serine modification. One copy of the LRR 2 repeat lies at 6853–6875; that stretch reads TGVSRVDLSVNAIETFDDHGLPA. Residues 7432–7507 form the Carrier 7 domain; it reads GPRTPQEEIL…QLAEQLGSDG (76 aa). An O-(pantetheine 4'-phosphoryl)serine modification is found at S7467.

Pantetheine 4'-phosphate is required as a cofactor.

Its function is as follows. Probable non-canonical nonribosomal peptide synthetase (NRPS); part of the gene cluster that mediates the biosynthesis of cyclic heptapeptides, known as cyclomarins and also of cyclic dipeptides, called cyclomarazines, which have both antimicrobial and cytotoxic effects. First, CymD catalyzes the reverse N-prenylation of monomeric L-tryptophan with dimethylallyl diphosphate (DMAPP) to form N-(1,1-dimethylallyl)-tryptophan (r-N-DMAT). The N-(1,1-dimethylallyl)-tryptophan produced by CymD is then combined with a range of standard and nonproteinogenic amino acid substrates to synthesize the peptides, a process that is probably catalyzed by the non-canonical nonribosomal peptide synthetase (NRPS), CymA. Other proteins in the cluster catalyze further modifications of the peptides including CymV which catalyzes the oxidation of olefinic cyclomarins and cyclomarazines to their respective epoxide derivatives. This is Probable non-canonical nonribosomal peptide synthetase (NRPS) CymA from Salinispora arenicola (strain CNS-205).